The primary structure comprises 398 residues: Putative F-box protein At4g17780 (398 aa).

Positions 8-55 (PSSIYIVADLLEDIFLRLPLKSILISKSVSKRWRSILESKTFVERRMS) constitute an F-box domain.

The protein is Putative F-box protein At4g17780 of Arabidopsis thaliana (Mouse-ear cress).